The following is a 507-amino-acid chain: Phosphoprotein (507 aa).

Residues 1 to 48 (MAEEQARHVKNGLECIRALKAEPIGSLAIEEAMAAWSEISDNPGQERA) form an interaction with N0 region. Disordered regions lie at residues 41–99 (DNPG…PPRN), 134–163 (GLDG…TEGY), 201–231 (NNFP…IKKG), and 250–273 (GATQ…GNVP). The residue at position 86 (Ser-86) is a Phosphoserine. Positions 134 to 145 (GLDGDSTLSGGD) are enriched in low complexity. The segment covering 146 to 160 (NESENSDVDIGEPDT) has biased composition (acidic residues). Ser-151 carries the phosphoserine modification. Residues 260-270 (SEPSGPGAPAG) are compositionally biased toward low complexity. The tract at residues 304–376 (GDYYDDELFS…LSSIMIAIPG (73 aa)) is multimerization. 2 interaction with the L polymerase regions span residues 361–377 (STLE…IPGL) and 396–410 (PIIG…AEVL). The interval 457-507 (GPASRSVIRSIIKSSRLEEDRKRYLMTLLDDIKGANDLAKFHQMLMKIIMK) is x domain (XD). The segment at 459–507 (ASRSVIRSIIKSSRLEEDRKRYLMTLLDDIKGANDLAKFHQMLMKIIMK) is interaction with the nucleocapsid (N-RNA).

It belongs to the morbillivirus P protein family. As to quaternary structure, homotetramer. Interacts (via multimerization domain and XD domain) with polymerase L; this interaction forms the polymerase L-P complex. Interacts (via N-terminus) with N0 (via Ncore); this interaction allows P to chaperon N0 to avoid N polymerization and non-specific RNA binding before encapsidation. Interacts (via C-terminus) with N-RNA template (via Ntail); this interaction maintains the P/L complex anchored to the nucleocapsid template during the sequential transcription. Interacts (via C-terminus) with protein C this interaction allows C to associate with the ribonucleocapsid. Phosphorylation on serines by host CK2 is necessary for the formation of viral factories.

Functionally, essential cofactor of the RNA polymerase L that plays a central role in the transcription and replication by forming the polymerase complex with RNA polymerase L and recruiting L to the genomic N-RNA template for RNA synthesis. Also plays a central role in the encapsidation of nascent RNA chains by forming the encapsidation complex with the nucleocapsid protein N (N-P complex). Acts as a chaperone for newly synthesized free N protein, so-called N0, allowing encapsidation of nascent RNA chains during replication. The nucleoprotein protein N prevents excessive phosphorylation of P, which leads to down-regulation of viral transcription/ replication. Participates, together with N, in the formation of viral factories (viroplasms), which are large inclusions in the host cytoplasm where replication takes place. This chain is Phosphoprotein (P/V), found in Measles virus (strain Edmonston) (MeV).